The following is a 355-amino-acid chain: Ribosomal RNA small subunit methyltransferase H (355 aa).

S-adenosyl-L-methionine contacts are provided by residues 55 to 57, Asp-75, Asp-122, and Gln-129; that span reads GGH. The tract at residues 327 to 355 is disordered; the sequence is ERTSQPLPATGAEDFVPAVPGAAEKGRRR.

It belongs to the methyltransferase superfamily. RsmH family.

It localises to the cytoplasm. The enzyme catalyses cytidine(1402) in 16S rRNA + S-adenosyl-L-methionine = N(4)-methylcytidine(1402) in 16S rRNA + S-adenosyl-L-homocysteine + H(+). Functionally, specifically methylates the N4 position of cytidine in position 1402 (C1402) of 16S rRNA. The chain is Ribosomal RNA small subunit methyltransferase H from Bordetella avium (strain 197N).